Reading from the N-terminus, the 243-residue chain is Peptidyl-tRNA hydrolase (243 aa).

Tyrosine 14 is a binding site for tRNA. Histidine 19 (proton acceptor) is an active-site residue. The tRNA site is built by phenylalanine 64, asparagine 66, and asparagine 112. The segment at 188 to 243 (GGKAEEEKPRKDNKTTEKKPAGQSHIHQARNHNQPKVLTTGPMADILKKMFGNKGE) is disordered. A compositionally biased stretch (basic and acidic residues) spans 190–207 (KAEEEKPRKDNKTTEKKP).

It belongs to the PTH family. As to quaternary structure, monomer.

The protein localises to the cytoplasm. The enzyme catalyses an N-acyl-L-alpha-aminoacyl-tRNA + H2O = an N-acyl-L-amino acid + a tRNA + H(+). Hydrolyzes ribosome-free peptidyl-tRNAs (with 1 or more amino acids incorporated), which drop off the ribosome during protein synthesis, or as a result of ribosome stalling. Its function is as follows. Catalyzes the release of premature peptidyl moieties from peptidyl-tRNA molecules trapped in stalled 50S ribosomal subunits, and thus maintains levels of free tRNAs and 50S ribosomes. This chain is Peptidyl-tRNA hydrolase, found in Rhizobium leguminosarum bv. trifolii (strain WSM2304).